A 407-amino-acid chain; its full sequence is Imidazolonepropionase (407 aa).

His-72 and His-74 together coordinate Fe(3+). 2 residues coordinate Zn(2+): His-72 and His-74. Arg-81, Tyr-144, and His-177 together coordinate 4-imidazolone-5-propanoate. Tyr-144 is an N-formimidoyl-L-glutamate binding site. Residue His-242 participates in Fe(3+) binding. His-242 is a Zn(2+) binding site. Gln-245 is a binding site for 4-imidazolone-5-propanoate. Asp-317 contacts Fe(3+). Asp-317 is a binding site for Zn(2+). 2 residues coordinate N-formimidoyl-L-glutamate: Asn-319 and Gly-321. Thr-322 is a binding site for 4-imidazolone-5-propanoate.

The protein belongs to the metallo-dependent hydrolases superfamily. HutI family. Zn(2+) serves as cofactor. It depends on Fe(3+) as a cofactor.

The protein localises to the cytoplasm. The catalysed reaction is 4-imidazolone-5-propanoate + H2O = N-formimidoyl-L-glutamate. The protein operates within amino-acid degradation; L-histidine degradation into L-glutamate; N-formimidoyl-L-glutamate from L-histidine: step 3/3. Catalyzes the hydrolytic cleavage of the carbon-nitrogen bond in imidazolone-5-propanoate to yield N-formimidoyl-L-glutamate. It is the third step in the universal histidine degradation pathway. In Aliivibrio salmonicida (strain LFI1238) (Vibrio salmonicida (strain LFI1238)), this protein is Imidazolonepropionase.